Here is a 398-residue protein sequence, read N- to C-terminus: Set1 complex component swd1 (398 aa).

5 WD repeats span residues 22-61, 64-103, 162-202, 247-295, and 296-336; these read LKHG…VSRV, GHTR…IVYQ, NRSK…IRSS, KFQD…KILE, and GPKE…SWSA.

As to quaternary structure, component of the Set1 complex composed of ash2, sdc1, set1, shg1, spp1, swd1, swd2 and swd3.

The protein localises to the nucleus. In terms of biological role, the Set1 complex specifically methylates 'Lys-4' of histone H3. The chain is Set1 complex component swd1 (swd1) from Schizosaccharomyces pombe (strain 972 / ATCC 24843) (Fission yeast).